Reading from the N-terminus, the 204-residue chain is 3-isopropylmalate dehydratase small subunit (204 aa).

The protein belongs to the LeuD family. LeuD type 1 subfamily. Heterodimer of LeuC and LeuD.

The catalysed reaction is (2R,3S)-3-isopropylmalate = (2S)-2-isopropylmalate. The protein operates within amino-acid biosynthesis; L-leucine biosynthesis; L-leucine from 3-methyl-2-oxobutanoate: step 2/4. Its function is as follows. Catalyzes the isomerization between 2-isopropylmalate and 3-isopropylmalate, via the formation of 2-isopropylmaleate. The protein is 3-isopropylmalate dehydratase small subunit of Roseiflexus castenholzii (strain DSM 13941 / HLO8).